Consider the following 326-residue polypeptide: Lipoyl synthase (326 aa).

[4Fe-4S] cluster is bound by residues Cys74, Cys79, Cys85, Cys100, Cys104, Cys107, and Ser314. Positions 85–303 (CFGRGTATFM…EEEAYKMGFS (219 aa)) constitute a Radical SAM core domain.

It belongs to the radical SAM superfamily. Lipoyl synthase family. [4Fe-4S] cluster serves as cofactor.

Its subcellular location is the cytoplasm. The enzyme catalyses [[Fe-S] cluster scaffold protein carrying a second [4Fe-4S](2+) cluster] + N(6)-octanoyl-L-lysyl-[protein] + 2 oxidized [2Fe-2S]-[ferredoxin] + 2 S-adenosyl-L-methionine + 4 H(+) = [[Fe-S] cluster scaffold protein] + N(6)-[(R)-dihydrolipoyl]-L-lysyl-[protein] + 4 Fe(3+) + 2 hydrogen sulfide + 2 5'-deoxyadenosine + 2 L-methionine + 2 reduced [2Fe-2S]-[ferredoxin]. It functions in the pathway protein modification; protein lipoylation via endogenous pathway; protein N(6)-(lipoyl)lysine from octanoyl-[acyl-carrier-protein]: step 2/2. In terms of biological role, catalyzes the radical-mediated insertion of two sulfur atoms into the C-6 and C-8 positions of the octanoyl moiety bound to the lipoyl domains of lipoate-dependent enzymes, thereby converting the octanoylated domains into lipoylated derivatives. The polypeptide is Lipoyl synthase (Acidovorax ebreus (strain TPSY) (Diaphorobacter sp. (strain TPSY))).